Consider the following 187-residue polypeptide: HTH-type transcriptional repressor Rv1474c (187 aa).

One can recognise an HTH tetR-type domain in the interval 10–70 (AARRRQILDG…ALAREDTERM (61 aa)). The H-T-H motif DNA-binding region spans 33–52 (TVRRLEQAIGMSRGAIFHHF).

As to quaternary structure, homodimer.

Binding to DNA is abolished in the presence of high concentration of iron. Specifically binds to tetracycline, which leads to a conformational change in the structure of the protein and inhibits the DNA binding activity. Its function is as follows. Represses the expression of the aconitase gene acn and its own expression, in an iron-responsive manner. Binds to the inverted repeat element present in the upstream region of acn (Rv1475c)-Rv1474c operon. Preferentially binds to major groove of the DNA. The polypeptide is HTH-type transcriptional repressor Rv1474c (Mycobacterium tuberculosis (strain ATCC 25618 / H37Rv)).